Here is an 89-residue protein sequence, read N- to C-terminus: MAKESVKARNLKRQALVERYAAKRAKLKEAGDYLALDKLPKNASPVRVRNRCKITGRARGYMRKFGISRIVFREWAAQGKIPGVIKASW.

This sequence belongs to the universal ribosomal protein uS14 family. In terms of assembly, part of the 30S ribosomal subunit. Contacts proteins S3 and S10.

Its function is as follows. Binds 16S rRNA, required for the assembly of 30S particles and may also be responsible for determining the conformation of the 16S rRNA at the A site. The polypeptide is Small ribosomal subunit protein uS14 (Amoebophilus asiaticus (strain 5a2)).